The following is a 1098-amino-acid chain: Protein translocase subunit SecA (1098 aa).

ATP is bound by residues Gln176, 194–198 (GEGKT), and Asp696. The disordered stretch occupies residues 1024 to 1098 (EPEQVREAAP…KYKNCHGQNA (75 aa)). 2 stretches are compositionally biased toward basic and acidic residues: residues 1041 to 1051 (QYREEKQDLSD) and 1058 to 1077 (AEHD…KTVG). Residues Cys1082, Cys1084, Cys1093, and His1094 each coordinate Zn(2+).

The protein belongs to the SecA family. As to quaternary structure, monomer and homodimer. Part of the essential Sec protein translocation apparatus which comprises SecA, SecYEG and auxiliary proteins SecDF. Other proteins may also be involved. It depends on Zn(2+) as a cofactor.

It localises to the cell inner membrane. The protein resides in the cytoplasm. It catalyses the reaction ATP + H2O + cellular proteinSide 1 = ADP + phosphate + cellular proteinSide 2.. Part of the Sec protein translocase complex. Interacts with the SecYEG preprotein conducting channel. Has a central role in coupling the hydrolysis of ATP to the transfer of proteins into and across the cell membrane, serving as an ATP-driven molecular motor driving the stepwise translocation of polypeptide chains across the membrane. The polypeptide is Protein translocase subunit SecA (Phocaeicola vulgatus (strain ATCC 8482 / DSM 1447 / JCM 5826 / CCUG 4940 / NBRC 14291 / NCTC 11154) (Bacteroides vulgatus)).